The chain runs to 549 residues: Lipase 1 (549 aa).

Residues 1 to 15 (MELALALSLIASVAA) form the signal peptide. Cysteine 75 and cysteine 112 are disulfide-bonded. Residue serine 224 is the Acyl-ester intermediate of the active site. An intrachain disulfide couples cysteine 283 to cysteine 292. A glycan (N-linked (GlcNAc...) asparagine) is linked at asparagine 329. Glutamate 356 functions as the Charge relay system in the catalytic mechanism. Asparagine 366 is a glycosylation site (N-linked (GlcNAc...) asparagine). Histidine 464 serves as the catalytic Charge relay system.

Belongs to the type-B carboxylesterase/lipase family.

It carries out the reaction a triacylglycerol + H2O = a diacylglycerol + a fatty acid + H(+). This chain is Lipase 1 (LIP1), found in Diutina rugosa (Yeast).